Reading from the N-terminus, the 593-residue chain is Tyrosine-protein phosphatase non-receptor type 9 (593 aa).

Position 1 is an N-acetylmethionine (M1). Residues 1–20 are disordered; the sequence is MEPATAPRPDMAPELTPEEE. In terms of domain architecture, CRAL-TRIO spans 84-243; that stretch reads EEPLRSEILS…NLGGYVKIDL (160 aa). Residues 303–574 form the Tyrosine-protein phosphatase domain; it reads IYEEYEDIRR…YFCYKAILEF (272 aa). C515 functions as the Phosphocysteine intermediate in the catalytic mechanism.

The protein belongs to the protein-tyrosine phosphatase family. Non-receptor class 3 subfamily.

It is found in the cytoplasm. It carries out the reaction O-phospho-L-tyrosyl-[protein] + H2O = L-tyrosyl-[protein] + phosphate. In terms of biological role, protein-tyrosine phosphatase that could participate in the transfer of hydrophobic ligands or in functions of the Golgi apparatus. This Mus musculus (Mouse) protein is Tyrosine-protein phosphatase non-receptor type 9 (Ptpn9).